The primary structure comprises 277 residues: Phosphatidylglycerol--prolipoprotein diacylglyceryl transferase (277 aa).

The next 4 membrane-spanning stretches (helical) occupy residues 18–38 (ISVK…LLLA), 51–71 (IIVD…RIYY), 89–109 (IWHG…TAII), and 116–136 (ISFW…QAIG). R137 is a binding site for a 1,2-diacyl-sn-glycero-3-phospho-(1'-sn-glycerol). 3 consecutive transmembrane segments (helical) span residues 177-197 (QPTF…LLII), 205-225 (GELF…IEGM), and 235-255 (FRVS…IIIY).

It belongs to the Lgt family.

It is found in the cell membrane. It carries out the reaction L-cysteinyl-[prolipoprotein] + a 1,2-diacyl-sn-glycero-3-phospho-(1'-sn-glycerol) = an S-1,2-diacyl-sn-glyceryl-L-cysteinyl-[prolipoprotein] + sn-glycerol 1-phosphate + H(+). The protein operates within protein modification; lipoprotein biosynthesis (diacylglyceryl transfer). Functionally, catalyzes the transfer of the diacylglyceryl group from phosphatidylglycerol to the sulfhydryl group of the N-terminal cysteine of a prolipoprotein, the first step in the formation of mature lipoproteins. The sequence is that of Phosphatidylglycerol--prolipoprotein diacylglyceryl transferase from Listeria monocytogenes serotype 4b (strain CLIP80459).